Reading from the N-terminus, the 130-residue chain is Small ribosomal subunit protein uS11c (130 aa).

Belongs to the universal ribosomal protein uS11 family. As to quaternary structure, part of the 30S ribosomal subunit.

Its subcellular location is the plastid. It localises to the chloroplast. The protein is Small ribosomal subunit protein uS11c of Stigeoclonium helveticum (Green alga).